We begin with the raw amino-acid sequence, 353 residues long: Photosystem II protein D1 (353 aa).

T2 is modified (N-acetylthreonine). At T2 the chain carries Phosphothreonine. The next 3 helical transmembrane spans lie at 29-46, 118-133, and 142-156; these read YIGW…TATS, HFLL…EWEL, and WIAV…AAAA. Chlorophyll a is bound at residue H118. Residue Y126 participates in pheophytin a binding. [CaMn4O5] cluster-binding residues include D170 and E189. The helical transmembrane segment at 197–218 threads the bilayer; that stretch reads FHMLGVAGVFGGSLFSAMHGSL. H198 serves as a coordination point for chlorophyll a. A quinone contacts are provided by residues H215 and 264–265; that span reads SF. H215 contacts Fe cation. Residue H272 participates in Fe cation binding. A helical membrane pass occupies residues 274–288; that stretch reads FLAAWPVVGIWFTAL. Residues H332, E333, D342, and A344 each contribute to the [CaMn4O5] cluster site. The propeptide occupies 345–353; that stretch reads SVEAPSVKA.

The protein belongs to the reaction center PufL/M/PsbA/D family. In terms of assembly, PSII is composed of 1 copy each of membrane proteins PsbA, PsbB, PsbC, PsbD, PsbE, PsbF, PsbH, PsbI, PsbJ, PsbK, PsbL, PsbM, PsbT, PsbX, PsbY, PsbZ, Psb30/Ycf12, at least 3 peripheral proteins of the oxygen-evolving complex and a large number of cofactors. It forms dimeric complexes. It depends on The D1/D2 heterodimer binds P680, chlorophylls that are the primary electron donor of PSII, and subsequent electron acceptors. It shares a non-heme iron and each subunit binds pheophytin, quinone, additional chlorophylls, carotenoids and lipids. D1 provides most of the ligands for the Mn4-Ca-O5 cluster of the oxygen-evolving complex (OEC). There is also a Cl(-1) ion associated with D1 and D2, which is required for oxygen evolution. The PSII complex binds additional chlorophylls, carotenoids and specific lipids. as a cofactor. Post-translationally, tyr-161 forms a radical intermediate that is referred to as redox-active TyrZ, YZ or Y-Z. In terms of processing, C-terminally processed by CTPA; processing is essential to allow assembly of the oxygen-evolving complex and thus photosynthetic growth.

The protein localises to the plastid. It localises to the chloroplast thylakoid membrane. It catalyses the reaction 2 a plastoquinone + 4 hnu + 2 H2O = 2 a plastoquinol + O2. Its function is as follows. Photosystem II (PSII) is a light-driven water:plastoquinone oxidoreductase that uses light energy to abstract electrons from H(2)O, generating O(2) and a proton gradient subsequently used for ATP formation. It consists of a core antenna complex that captures photons, and an electron transfer chain that converts photonic excitation into a charge separation. The D1/D2 (PsbA/PsbD) reaction center heterodimer binds P680, the primary electron donor of PSII as well as several subsequent electron acceptors. The protein is Photosystem II protein D1 of Angiopteris evecta (Mule's foot fern).